Consider the following 240-residue polypeptide: Homeobox protein DLX-4 (240 aa).

2 disordered regions span residues 44–70 (DLSY…DSYL) and 175–194 (LKQS…PSLS). The homeobox DNA-binding region spans 116–175 (LRKPRTIYSSLQLQHLNQRFQHTQYLALPERAQLAAQLGLTQTQVKIWFQNKRSKYKKLL).

The protein belongs to the distal-less homeobox family. In terms of tissue distribution, branchial arches, molar and incisor teeth and limbs.

The protein resides in the nucleus. Its function is as follows. May play a role in determining the production of hemoglobin S. May act as a repressor. During embryonic development, plays a role in palatogenesis. This chain is Homeobox protein DLX-4 (Dlx4), found in Mus musculus (Mouse).